The primary structure comprises 130 residues: Small ribosomal subunit protein uS8 (130 aa).

It belongs to the universal ribosomal protein uS8 family.

In Candida glabrata (strain ATCC 2001 / BCRC 20586 / JCM 3761 / NBRC 0622 / NRRL Y-65 / CBS 138) (Yeast), this protein is Small ribosomal subunit protein uS8 (RPS22).